The sequence spans 357 residues: O-methyltransferase 9 (357 aa).

S-adenosyl-L-methionine contacts are provided by Gly200, Asp224, Asn249, Phe250, and Lys263. His267 functions as the Proton acceptor in the catalytic mechanism.

This sequence belongs to the class I-like SAM-binding methyltransferase superfamily. Cation-independent O-methyltransferase family. COMT subfamily.

It catalyses the reaction (3,5-dichloro-2,4,6-trihydroxyphenyl)hexan-1-one + S-adenosyl-L-methionine = 1-(3,5-dichloro-2,6-dihydroxy-4-methoxyphenyl)hexan-1-one + S-adenosyl-L-homocysteine + H(+). The sequence is that of O-methyltransferase 9 (omt9) from Dictyostelium discoideum (Social amoeba).